We begin with the raw amino-acid sequence, 696 residues long: DEAD-box ATP-dependent RNA helicase 7 (696 aa).

Residues 1–116 are disordered; the sequence is MPSLPVAAAE…GDEDPADPNA (116 aa). Residues 16 to 97 adopt a coiled-coil conformation; sequence ESASKKSKRK…KVVVEEEEED (82 aa). Positions 27 to 38 are enriched in basic and acidic residues; it reads KAAEVEVEASSR. Basic residues predominate over residues 39–49; the sequence is KKEKKEKKRKA. Low complexity predominate over residues 67 to 77; it reads STSSDEPAPAA. A compositionally biased stretch (acidic residues) spans 92 to 112; sequence EEEEEDDDEGELTASGDEDPA. The Q motif signature appears at 115-143; it reads NALANFRISESLREKLKSKGIKALFPIQA. The region spanning 146–328 is the Helicase ATP-binding domain; it reads FDLVLDGHDL…LRFLKSGKKT (183 aa). 159-166 contributes to the ATP binding site; it reads ARTGQGKT. The short motif at 274–277 is the DEAD box element; sequence DEAD. One can recognise a Helicase C-terminal domain in the interval 357-500; sequence QVIPDIIRCY…ISAPQPTDVA (144 aa). Residues 641–696 are disordered; it reads LPPLQEREQSGGSRGGGRFGNRRFSGGGGGRGGGGRGFGGGRGRGGGGGNRFNKRY. The segment covering 652–690 has biased composition (gly residues); it reads GSRGGGRFGNRRFSGGGGGRGGGGRGFGGGRGRGGGGGN.

It belongs to the DEAD box helicase family. DDX21/DDX50 subfamily.

The protein resides in the nucleus. The catalysed reaction is ATP + H2O = ADP + phosphate + H(+). The polypeptide is DEAD-box ATP-dependent RNA helicase 7 (Oryza sativa subsp. japonica (Rice)).